The following is a 641-amino-acid chain: Phosphomethylpyrimidine synthase (641 aa).

Residues Asn221, Met250, Tyr279, His315, 335 to 337, 376 to 379, and Glu415 contribute to the substrate site; these read SRG and DGLR. Position 419 (His419) interacts with Zn(2+). A substrate-binding site is contributed by Tyr442. A Zn(2+)-binding site is contributed by His483. The [4Fe-4S] cluster site is built by Cys563, Cys566, and Cys571.

This sequence belongs to the ThiC family. As to quaternary structure, homodimer. Requires [4Fe-4S] cluster as cofactor.

It carries out the reaction 5-amino-1-(5-phospho-beta-D-ribosyl)imidazole + S-adenosyl-L-methionine = 4-amino-2-methyl-5-(phosphooxymethyl)pyrimidine + CO + 5'-deoxyadenosine + formate + L-methionine + 3 H(+). It functions in the pathway cofactor biosynthesis; thiamine diphosphate biosynthesis. In terms of biological role, catalyzes the synthesis of the hydroxymethylpyrimidine phosphate (HMP-P) moiety of thiamine from aminoimidazole ribotide (AIR) in a radical S-adenosyl-L-methionine (SAM)-dependent reaction. The protein is Phosphomethylpyrimidine synthase of Rhodopseudomonas palustris (strain TIE-1).